The primary structure comprises 83 residues: Exodeoxyribonuclease 7 small subunit (83 aa).

It belongs to the XseB family. In terms of assembly, heterooligomer composed of large and small subunits.

The protein localises to the cytoplasm. It catalyses the reaction Exonucleolytic cleavage in either 5'- to 3'- or 3'- to 5'-direction to yield nucleoside 5'-phosphates.. Bidirectionally degrades single-stranded DNA into large acid-insoluble oligonucleotides, which are then degraded further into small acid-soluble oligonucleotides. This Bradyrhizobium diazoefficiens (strain JCM 10833 / BCRC 13528 / IAM 13628 / NBRC 14792 / USDA 110) protein is Exodeoxyribonuclease 7 small subunit.